Consider the following 501-residue polypeptide: IQ domain-containing protein M (501 aa).

The span at 237-247 (ERQPIKPEPKS) shows a compositional bias: basic and acidic residues. A disordered region spans residues 237-262 (ERQPIKPEPKSQPRIKGTPNKTDKLD). The IQ domain maps to 290–319 (LIRMVTVMQAHVRGWLERKRLQRVMTKALD).

The protein is IQ domain-containing protein M of Homo sapiens (Human).